A 341-amino-acid chain; its full sequence is Dihydroorotate dehydrogenase (quinone) (341 aa).

FMN contacts are provided by residues 61–65 and Thr85; that span reads AGLDK. Lys65 is a binding site for substrate. 110-114 serves as a coordination point for substrate; sequence NRMGF. 2 residues coordinate FMN: Asn138 and Asn171. Asn171 is a binding site for substrate. Ser174 acts as the Nucleophile in catalysis. Residue Asn176 participates in substrate binding. FMN contacts are provided by Lys216 and Thr244. 245 to 246 lines the substrate pocket; the sequence is NT. Residues Gly267, Gly296, and 317-318 each bind FMN; that span reads YS.

This sequence belongs to the dihydroorotate dehydrogenase family. Type 2 subfamily. In terms of assembly, monomer. FMN serves as cofactor.

Its subcellular location is the cell membrane. The enzyme catalyses (S)-dihydroorotate + a quinone = orotate + a quinol. Its pathway is pyrimidine metabolism; UMP biosynthesis via de novo pathway; orotate from (S)-dihydroorotate (quinone route): step 1/1. In terms of biological role, catalyzes the conversion of dihydroorotate to orotate with quinone as electron acceptor. This chain is Dihydroorotate dehydrogenase (quinone), found in Pseudomonas putida (strain GB-1).